Here is a 143-residue protein sequence, read N- to C-terminus: Ribonuclease VapC33 (143 aa).

Mg(2+)-binding residues include Asp5 and Asp108.

It belongs to the PINc/VapC protein family. The cofactor is Mg(2+).

Its function is as follows. Toxic component of a type II toxin-antitoxin (TA) system. An RNase. Its toxic effect is neutralized by coexpression with cognate antitoxin VapB33. This chain is Ribonuclease VapC33, found in Mycobacterium tuberculosis (strain CDC 1551 / Oshkosh).